A 349-amino-acid polypeptide reads, in one-letter code: Protein-glutamate methylesterase/protein-glutamine glutaminase 2 (349 aa).

The 118-residue stretch at S4–E121 folds into the Response regulatory domain. D55 bears the 4-aspartylphosphate mark. The CheB-type methylesterase domain occupies L151–R343. Residues S163, H189, and D285 contribute to the active site.

It belongs to the CheB family. Interacts with the C-terminal pentapeptide GWEEF of McpB. Phosphorylated by CheA. Phosphorylation of the N-terminal regulatory domain activates the methylesterase activity.

It is found in the cytoplasm. It catalyses the reaction [protein]-L-glutamate 5-O-methyl ester + H2O = L-glutamyl-[protein] + methanol + H(+). The catalysed reaction is L-glutaminyl-[protein] + H2O = L-glutamyl-[protein] + NH4(+). In terms of biological role, involved in chemotaxis. Part of a chemotaxis signal transduction system that modulates chemotaxis in response to various stimuli. Catalyzes the demethylation of specific methylglutamate residues introduced into the chemoreceptors (methyl-accepting chemotaxis proteins or MCP) by CheR. Also mediates the irreversible deamidation of specific glutamine residues to glutamic acid. Acts on the methyl-accepting chemotaxis protein McpB. May be involved in a specific chemotactic response, which takes place during infection and is required for P.aeruginosa pathogenicity. This is Protein-glutamate methylesterase/protein-glutamine glutaminase 2 from Pseudomonas aeruginosa (strain ATCC 15692 / DSM 22644 / CIP 104116 / JCM 14847 / LMG 12228 / 1C / PRS 101 / PAO1).